The primary structure comprises 249 residues: Flagellar L-ring protein (249 aa).

An N-terminal signal peptide occupies residues Met1–Gly25. Cys26 carries N-palmitoyl cysteine lipidation. A lipid anchor (S-diacylglycerol cysteine) is attached at Cys26.

The protein belongs to the FlgH family. In terms of assembly, the basal body constitutes a major portion of the flagellar organelle and consists of four rings (L,P,S, and M) mounted on a central rod.

Its subcellular location is the cell outer membrane. It localises to the bacterial flagellum basal body. Its function is as follows. Assembles around the rod to form the L-ring and probably protects the motor/basal body from shearing forces during rotation. This Afipia carboxidovorans (strain ATCC 49405 / DSM 1227 / KCTC 32145 / OM5) (Oligotropha carboxidovorans) protein is Flagellar L-ring protein.